Consider the following 352-residue polypeptide: 7,8-didemethyl-8-hydroxy-5-deazariboflavin synthase (352 aa).

The 241-residue stretch at 35–275 (ITFSKNAFIP…EGISIQVPPN (241 aa)) folds into the Radical SAM core domain. [4Fe-4S] cluster is bound by residues cysteine 49, cysteine 53, and cysteine 56.

Belongs to the radical SAM superfamily. CofG family. Consists of two subunits, CofG and CofH. It depends on [4Fe-4S] cluster as a cofactor.

The catalysed reaction is 5-amino-5-(4-hydroxybenzyl)-6-(D-ribitylimino)-5,6-dihydrouracil + S-adenosyl-L-methionine = 7,8-didemethyl-8-hydroxy-5-deazariboflavin + 5'-deoxyadenosine + L-methionine + NH4(+) + H(+). Its pathway is cofactor biosynthesis; coenzyme F0 biosynthesis. Functionally, catalyzes the radical-mediated synthesis of 7,8-didemethyl-8-hydroxy-5-deazariboflavin from 5-amino-5-(4-hydroxybenzyl)-6-(D-ribitylimino)-5,6-dihydrouracil. The polypeptide is 7,8-didemethyl-8-hydroxy-5-deazariboflavin synthase (Methanococcus maripaludis (strain C5 / ATCC BAA-1333)).